A 184-amino-acid polypeptide reads, in one-letter code: Putative manganese efflux pump MntP (184 aa).

The next 5 helical transmembrane spans lie at 39-59, 65-85, 102-122, 132-152, and 161-181; these read IFGVFQALMPFLGYILGLSFV, IDHFIAFGILGFLGAKMILEA, LALGAVATSIDALAVGITFSF, LIIGTVCFVLCTAACYVGKIL, and LVLGGLILIGLGTKILITHLV.

The protein belongs to the MntP (TC 9.B.29) family.

It localises to the cell inner membrane. Its function is as follows. Probably functions as a manganese efflux pump. The chain is Putative manganese efflux pump MntP from Campylobacter curvus (strain 525.92).